The chain runs to 53 residues: Large ribosomal subunit protein bL32c (53 aa).

It belongs to the bacterial ribosomal protein bL32 family.

It localises to the plastid. Its subcellular location is the chloroplast. The chain is Large ribosomal subunit protein bL32c from Glycine max (Soybean).